Reading from the N-terminus, the 236-residue chain is Ion-translocating oxidoreductase complex subunit E (236 aa).

Helical transmembrane passes span 18-38, 39-59, 69-89, 92-112, 128-148, and 182-202; these read ALVQ…ATNA, LGLG…VSAL, IPIY…LINA, FGLY…CIVI, ALDG…LGAL, and PFLL…MLAF. A disordered region spans residues 217–236; it reads RSAVGQALRGAAPTDNHEQA.

The protein belongs to the NqrDE/RnfAE family. In terms of assembly, the complex is composed of six subunits: RnfA, RnfB, RnfC, RnfD, RnfE and RnfG.

Its subcellular location is the cell inner membrane. Its function is as follows. Part of a membrane-bound complex that couples electron transfer with translocation of ions across the membrane. This chain is Ion-translocating oxidoreductase complex subunit E, found in Edwardsiella ictaluri (strain 93-146).